We begin with the raw amino-acid sequence, 299 residues long: Leucine zipper transcription factor-like protein 1 (299 aa).

Residues Leu96 to Glu296 adopt a coiled-coil conformation. An interaction with BSS9 region spans residues Gly145 to Asp299.

Belongs to the LZTFL1 family. In terms of assembly, self-associates. Interacts with BBS9; the interaction mediates the association of LZTL1 with the BBsome complex and regulates BBSome ciliary trafficking.

It localises to the cytoplasm. Its function is as follows. Regulates ciliary localization of the BBSome complex. Together with the BBSome complex, controls SMO ciliary trafficking and contributes to the sonic hedgehog (SHH) pathway regulation. May play a role in neurite outgrowth. May have tumor suppressor function. This Pongo abelii (Sumatran orangutan) protein is Leucine zipper transcription factor-like protein 1 (LZTFL1).